Here is a 1358-residue protein sequence, read N- to C-terminus: Protein STU1 (1358 aa).

Disordered regions lie at residues 915–950 and 970–990; these read FVADSPSDSDNDDTKKNGSDVVDHEEIRDHEESHGF and QPETVDENVDPMEVDSPDESN. Residues 926 to 949 are compositionally biased toward basic and acidic residues; that stretch reads DDTKKNGSDVVDHEEIRDHEESHG. A compositionally biased stretch (acidic residues) spans 973-990; that stretch reads TVDENVDPMEVDSPDESN.

This sequence belongs to the CLASP family. As to quaternary structure, interacts with microtubules.

The protein resides in the cytoplasm. The protein localises to the cytoskeleton. It localises to the nucleus. Its subcellular location is the spindle. Its function is as follows. Microtubule binding protein that promotes the stabilization of dynamic microtubules. Required for mitotic spindle formation. The polypeptide is Protein STU1 (STU1) (Kluyveromyces lactis (strain ATCC 8585 / CBS 2359 / DSM 70799 / NBRC 1267 / NRRL Y-1140 / WM37) (Yeast)).